The sequence spans 462 residues: MGPWTHSLRAALLLVLLGVCTVSSDTPANCTYPDLLGTWVFQVGPRHPRSHINCSVMEPTEEKVVIHLKKLDTAYDEVGNSGYFTLIYNQGFEIVLNDYKWFAFFKYEVKGSRAISYCHETMTGWVHDVLGRNWACFVGKKMANHSEKVYVNVAHLGGLQEKYSERLYSHNHNFVKAINSVQKSWTATTYEEYEKLSIRDLIRRSGHSGRILRPKPAPITDEIQQQILSLPESWDWRNVRGINFVSPVRNQESCGSCYSFASLGMLEARIRILTNNSQTPILSPQEVVSCSPYAQGCDGGFPYLIAGKYAQDFGVVEENCFPYTATDAPCKPKENCLRYYSSEYYYVGGFYGGCNEALMKLELVKHGPMAVAFEVHDDFLHYHSGIYHHTGLSDPFNPFELTNHAVLLVGYGKDPVTGLDYWIVKNSWGSQWGESGYFRIRRGTDECAIESIAMAAIPIPKL.

Positions 1 to 24 (MGPWTHSLRAALLLVLLGVCTVSS) are cleaved as a signal peptide. Residues asparagine 29 and asparagine 53 are each glycosylated (N-linked (GlcNAc...) asparagine). 2 cysteine pairs are disulfide-bonded: cysteine 30-cysteine 118 and cysteine 54-cysteine 136. A propeptide spanning residues 135-229 (ACFVGKKMAN…TDEIQQQILS (95 aa)) is cleaved from the precursor. N-linked (GlcNAc...) asparagine glycosylation is present at asparagine 144. Intrachain disulfides connect cysteine 254-cysteine 297, cysteine 290-cysteine 330, and cysteine 320-cysteine 336. Residue cysteine 257 is part of the active site. N-linked (GlcNAc...) asparagine glycosylation is present at asparagine 275. Chloride-binding residues include phenylalanine 301 and tyrosine 303. Residue tyrosine 346 coordinates chloride. Residues histidine 404 and asparagine 426 contribute to the active site.

The protein belongs to the peptidase C1 family. In terms of assembly, tetramer of heterotrimers consisting of exclusion domain, heavy- and light chains. Chloride is required as a cofactor. Broadly distributed, but higher levels found in liver, spleen, intestine, lung and kidney.

The protein localises to the lysosome. It catalyses the reaction Release of an N-terminal dipeptide, Xaa-Yaa-|-Zaa-, except when Xaa is Arg or Lys, or Yaa or Zaa is Pro.. Functionally, thiol protease. Has dipeptidylpeptidase activity. Active against a broad range of dipeptide substrates composed of both polar and hydrophobic amino acids. Proline cannot occupy the P1 position and arginine cannot occupy the P2 position of the substrate. Can act as both an exopeptidase and endopeptidase. Activates serine proteases such as elastase, cathepsin G and granzymes A and B. The protein is Dipeptidyl peptidase 1 (Ctsc) of Rattus norvegicus (Rat).